A 310-amino-acid polypeptide reads, in one-letter code: Ribose-phosphate pyrophosphokinase (310 aa).

Residues 34–36 (DQE) and 93–94 (RQ) each bind ATP. Mg(2+) is bound by residues histidine 127 and aspartate 167. Residue lysine 190 is part of the active site. Residues arginine 192, aspartate 216, and 220 to 224 (DSGGT) contribute to the D-ribose 5-phosphate site.

The protein belongs to the ribose-phosphate pyrophosphokinase family. Class I subfamily. As to quaternary structure, homohexamer. Mg(2+) serves as cofactor.

It localises to the cytoplasm. It carries out the reaction D-ribose 5-phosphate + ATP = 5-phospho-alpha-D-ribose 1-diphosphate + AMP + H(+). The protein operates within metabolic intermediate biosynthesis; 5-phospho-alpha-D-ribose 1-diphosphate biosynthesis; 5-phospho-alpha-D-ribose 1-diphosphate from D-ribose 5-phosphate (route I): step 1/1. Functionally, involved in the biosynthesis of the central metabolite phospho-alpha-D-ribosyl-1-pyrophosphate (PRPP) via the transfer of pyrophosphoryl group from ATP to 1-hydroxyl of ribose-5-phosphate (Rib-5-P). This chain is Ribose-phosphate pyrophosphokinase, found in Brucella melitensis biotype 1 (strain ATCC 23456 / CCUG 17765 / NCTC 10094 / 16M).